Reading from the N-terminus, the 279-residue chain is 4-hydroxy-3-methylbut-2-enyl diphosphate reductase (279 aa).

Residue Cys-12 participates in [4Fe-4S] cluster binding. 2 residues coordinate (2E)-4-hydroxy-3-methylbut-2-enyl diphosphate: His-36 and His-70. Residues His-36 and His-70 each contribute to the dimethylallyl diphosphate site. Isopentenyl diphosphate contacts are provided by His-36 and His-70. Position 92 (Cys-92) interacts with [4Fe-4S] cluster. His-120 is a binding site for (2E)-4-hydroxy-3-methylbut-2-enyl diphosphate. His-120 is a dimethylallyl diphosphate binding site. His-120 is a binding site for isopentenyl diphosphate. The active-site Proton donor is the Glu-122. Thr-158 is a binding site for (2E)-4-hydroxy-3-methylbut-2-enyl diphosphate. Cys-186 is a binding site for [4Fe-4S] cluster. (2E)-4-hydroxy-3-methylbut-2-enyl diphosphate contacts are provided by Ser-214, Ser-215, Asn-216, and Ser-258. Dimethylallyl diphosphate-binding residues include Ser-214, Ser-215, Asn-216, and Ser-258. Ser-214, Ser-215, Asn-216, and Ser-258 together coordinate isopentenyl diphosphate.

Belongs to the IspH family. [4Fe-4S] cluster serves as cofactor.

The enzyme catalyses isopentenyl diphosphate + 2 oxidized [2Fe-2S]-[ferredoxin] + H2O = (2E)-4-hydroxy-3-methylbut-2-enyl diphosphate + 2 reduced [2Fe-2S]-[ferredoxin] + 2 H(+). It catalyses the reaction dimethylallyl diphosphate + 2 oxidized [2Fe-2S]-[ferredoxin] + H2O = (2E)-4-hydroxy-3-methylbut-2-enyl diphosphate + 2 reduced [2Fe-2S]-[ferredoxin] + 2 H(+). It participates in isoprenoid biosynthesis; dimethylallyl diphosphate biosynthesis; dimethylallyl diphosphate from (2E)-4-hydroxy-3-methylbutenyl diphosphate: step 1/1. It functions in the pathway isoprenoid biosynthesis; isopentenyl diphosphate biosynthesis via DXP pathway; isopentenyl diphosphate from 1-deoxy-D-xylulose 5-phosphate: step 6/6. Catalyzes the conversion of 1-hydroxy-2-methyl-2-(E)-butenyl 4-diphosphate (HMBPP) into a mixture of isopentenyl diphosphate (IPP) and dimethylallyl diphosphate (DMAPP). Acts in the terminal step of the DOXP/MEP pathway for isoprenoid precursor biosynthesis. In Campylobacter fetus subsp. fetus (strain 82-40), this protein is 4-hydroxy-3-methylbut-2-enyl diphosphate reductase.